Consider the following 123-residue polypeptide: Protein LLP homolog (123 aa).

Basic residues predominate over residues 1–21 (MAKSLRSKWKRKMRAEKRKKN). Disordered regions lie at residues 1-22 (MAKS…KKNA) and 61-123 (DLDV…KLAW). Positions 70-89 (ESSKMDTELKRNKKNLRDQH) are enriched in basic and acidic residues. Residues 100–123 (QQKKLKSQCGKKKGKSKQAKKLAW) show a composition bias toward basic residues.

This sequence belongs to the learning-associated protein family.

It is found in the nucleus. It localises to the nucleolus. The protein localises to the chromosome. Regulates dendritic and spine growth and synaptic transmission. The sequence is that of Protein LLP homolog (llph) from Xenopus laevis (African clawed frog).